The following is a 51-amino-acid chain: VAPPQHLCGSHLVDALYLVCGDRGFFYNPKGIVEQCCHRPCNIFDLQNYCN.

3 disulfide bridges follow: Cys8–Cys37, Cys20–Cys50, and Cys36–Cys41.

This sequence belongs to the insulin family. As to quaternary structure, heterodimer of a B chain and an A chain linked by two disulfide bonds.

Its subcellular location is the secreted. Functionally, insulin decreases blood glucose concentration. It increases cell permeability to monosaccharides, amino acids and fatty acids. It accelerates glycolysis, the pentose phosphate cycle, and glycogen synthesis in liver. In Pagrus major (Red sea bream), this protein is Insulin.